The sequence spans 204 residues: MTTVINRKYRISRRLGVNLWGRAKDSVNKRKYPPGQHGILGFKKLSDFGKQFAAHKKFKFYYAISSKQLRRTFLDAYKRKGYTADNFIGALESRLSSVLYHSGFVPTIYSAKQLISHKHVTVNDKVVNISSYRVKPGDIVKIRERAAKIPILIEAEQKQERKAPDYLEADSKALSVKYLRAPQYSEVPYSADMEVNLVVEFYSR.

Residues 93-156 (SRLSSVLYHS…AKIPILIEAE (64 aa)) enclose the S4 RNA-binding domain.

It belongs to the universal ribosomal protein uS4 family. In terms of assembly, part of the 30S ribosomal subunit. Contacts protein S5. The interaction surface between S4 and S5 is involved in control of translational fidelity.

In terms of biological role, one of the primary rRNA binding proteins, it binds directly to 16S rRNA where it nucleates assembly of the body of the 30S subunit. Its function is as follows. With S5 and S12 plays an important role in translational accuracy. This chain is Small ribosomal subunit protein uS4, found in Wolbachia pipientis subsp. Culex pipiens (strain wPip).